Reading from the N-terminus, the 374-residue chain is Pyruvate dehydrogenase E1 component subunit beta-1, mitochondrial (374 aa).

Residues 1–34 constitute a mitochondrion transit peptide; sequence MLGIARRRLGSGCALGQLMQALRPAAAAAAARTY. Thiamine diphosphate is bound at residue E97. Residues I150, A198, I199, and D201 each contribute to the K(+) site.

In terms of assembly, tetramer of 2 alpha and 2 beta subunits. It depends on thiamine diphosphate as a cofactor.

Its subcellular location is the mitochondrion matrix. The catalysed reaction is N(6)-[(R)-lipoyl]-L-lysyl-[protein] + pyruvate + H(+) = N(6)-[(R)-S(8)-acetyldihydrolipoyl]-L-lysyl-[protein] + CO2. In terms of biological role, the pyruvate dehydrogenase complex catalyzes the overall conversion of pyruvate to acetyl-CoA and CO(2). It contains multiple copies of three enzymatic components: pyruvate dehydrogenase (E1), dihydrolipoamide acetyltransferase (E2) and lipoamide dehydrogenase (E3). The sequence is that of Pyruvate dehydrogenase E1 component subunit beta-1, mitochondrial from Oryza sativa subsp. japonica (Rice).